The following is a 119-amino-acid chain: Phosphoribosyl-AMP cyclohydrolase (119 aa).

Aspartate 77 is a Mg(2+) binding site. Residue cysteine 78 coordinates Zn(2+). Mg(2+)-binding residues include aspartate 79 and aspartate 81. The Zn(2+) site is built by cysteine 94 and cysteine 101.

This sequence belongs to the PRA-CH family. As to quaternary structure, homodimer. It depends on Mg(2+) as a cofactor. The cofactor is Zn(2+).

It is found in the cytoplasm. The enzyme catalyses 1-(5-phospho-beta-D-ribosyl)-5'-AMP + H2O = 1-(5-phospho-beta-D-ribosyl)-5-[(5-phospho-beta-D-ribosylamino)methylideneamino]imidazole-4-carboxamide. It functions in the pathway amino-acid biosynthesis; L-histidine biosynthesis; L-histidine from 5-phospho-alpha-D-ribose 1-diphosphate: step 3/9. Functionally, catalyzes the hydrolysis of the adenine ring of phosphoribosyl-AMP. The protein is Phosphoribosyl-AMP cyclohydrolase of Ruegeria pomeroyi (strain ATCC 700808 / DSM 15171 / DSS-3) (Silicibacter pomeroyi).